The sequence spans 275 residues: Large ribosomal subunit protein uL2 (275 aa).

2 disordered regions span residues 222–243 (GSVMNPTDHPHGGGEGRAPIGR) and 256–275 (GGKTRRKKPSDNMIVRKRKP).

The protein belongs to the universal ribosomal protein uL2 family. As to quaternary structure, part of the 50S ribosomal subunit. Forms a bridge to the 30S subunit in the 70S ribosome.

In terms of biological role, one of the primary rRNA binding proteins. Required for association of the 30S and 50S subunits to form the 70S ribosome, for tRNA binding and peptide bond formation. It has been suggested to have peptidyltransferase activity; this is somewhat controversial. Makes several contacts with the 16S rRNA in the 70S ribosome. The protein is Large ribosomal subunit protein uL2 of Syntrophomonas wolfei subsp. wolfei (strain DSM 2245B / Goettingen).